Consider the following 149-residue polypeptide: Nucleoside diphosphate kinase (149 aa).

6 residues coordinate ATP: lysine 9, phenylalanine 57, arginine 85, threonine 91, arginine 102, and asparagine 112. The active-site Pros-phosphohistidine intermediate is the histidine 115.

The protein belongs to the NDK family. In terms of assembly, homotetramer. Mg(2+) is required as a cofactor.

The protein localises to the cytoplasm. It catalyses the reaction a 2'-deoxyribonucleoside 5'-diphosphate + ATP = a 2'-deoxyribonucleoside 5'-triphosphate + ADP. It carries out the reaction a ribonucleoside 5'-diphosphate + ATP = a ribonucleoside 5'-triphosphate + ADP. Major role in the synthesis of nucleoside triphosphates other than ATP. The ATP gamma phosphate is transferred to the NDP beta phosphate via a ping-pong mechanism, using a phosphorylated active-site intermediate. The sequence is that of Nucleoside diphosphate kinase from Staphylococcus haemolyticus (strain JCSC1435).